The primary structure comprises 475 residues: Ankyrin repeat, SAM and basic leucine zipper domain-containing protein 1 (475 aa).

Residues Met-1 to Gly-24 are disordered. Phosphoserine occurs at positions 17, 18, and 20. ANK repeat units lie at residues Glu-45 to Ser-74, Tyr-78 to Phe-107, Asp-110 to Val-144, Arg-148 to Ala-177, Asn-181 to Leu-210, and Asp-214 to Gly-243. Positions Ser-272–Glu-334 constitute an SAM domain.

Interacts with DDX4, PIWIL1, RANBP9 and TDRD1.

The protein localises to the cytoplasm. In terms of biological role, plays a central role during spermatogenesis by repressing transposable elements and preventing their mobilization, which is essential for the germline integrity. Acts via the piRNA metabolic process, which mediates the repression of transposable elements during meiosis by forming complexes composed of piRNAs and Piwi proteins and governs the methylation and subsequent repression of transposons. Its association with pi-bodies suggests a participation in the primary piRNAs metabolic process. Required prior to the pachytene stage to facilitate the production of multiple types of piRNAs, including those associated with repeats involved in the regulation of retrotransposons. May act by mediating protein-protein interactions during germ cell maturation. This Neofelis nebulosa (Clouded leopard) protein is Ankyrin repeat, SAM and basic leucine zipper domain-containing protein 1 (ASZ1).